An 85-amino-acid polypeptide reads, in one-letter code: Homeobox protein knotted-1-like 8 (85 aa).

The ELK domain maps to Glu1 to Phe21. Residues Ser22 to Ala85 constitute a DNA-binding region (homeobox; TALE-type).

Belongs to the TALE/KNOX homeobox family. Strongly expressed in ear inflorescence primordia and shoot meristem. Weakly expressed in embryos. Absent from leaves.

The protein resides in the nucleus. Its function is as follows. Probably binds to the DNA sequence 5'-TGAC-3'. In Zea mays (Maize), this protein is Homeobox protein knotted-1-like 8 (KNOX8).